A 474-amino-acid polypeptide reads, in one-letter code: tRNA-2-methylthio-N(6)-dimethylallyladenosine synthase (474 aa).

An MTTase N-terminal domain is found at 3–120; it reads KKLHIKTWGC…LPEMINSVRG (118 aa). Positions 12, 49, 83, 157, 161, and 164 each coordinate [4Fe-4S] cluster. The 233-residue stretch at 143-375 folds into the Radical SAM core domain; it reads RAEGPTAFVS…QERINQQAMA (233 aa). Positions 378-441 constitute a TRAM domain; sequence RRMLGTTQRI…PNSLRGKVVR (64 aa).

This sequence belongs to the methylthiotransferase family. MiaB subfamily. In terms of assembly, monomer. It depends on [4Fe-4S] cluster as a cofactor.

The protein resides in the cytoplasm. The enzyme catalyses N(6)-dimethylallyladenosine(37) in tRNA + (sulfur carrier)-SH + AH2 + 2 S-adenosyl-L-methionine = 2-methylsulfanyl-N(6)-dimethylallyladenosine(37) in tRNA + (sulfur carrier)-H + 5'-deoxyadenosine + L-methionine + A + S-adenosyl-L-homocysteine + 2 H(+). In terms of biological role, catalyzes the methylthiolation of N6-(dimethylallyl)adenosine (i(6)A), leading to the formation of 2-methylthio-N6-(dimethylallyl)adenosine (ms(2)i(6)A) at position 37 in tRNAs that read codons beginning with uridine. This chain is tRNA-2-methylthio-N(6)-dimethylallyladenosine synthase, found in Shigella boydii serotype 4 (strain Sb227).